A 189-amino-acid chain; its full sequence is Putative manganese efflux pump MntP (189 aa).

6 helical membrane passes run Ser2–Ile22, Ile36–Tyr56, Trp71–Ala91, Leu106–Ser126, Ile132–Leu152, and Ile167–Phe187.

This sequence belongs to the MntP (TC 9.B.29) family.

It localises to the cell membrane. In terms of biological role, probably functions as a manganese efflux pump. This Ruminiclostridium cellulolyticum (strain ATCC 35319 / DSM 5812 / JCM 6584 / H10) (Clostridium cellulolyticum) protein is Putative manganese efflux pump MntP.